The sequence spans 143 residues: Type II secretion system core protein G (143 aa).

A propeptide spans 1–8 (leader sequence); sequence MQKRRQSG. Position 9 is an N-methylphenylalanine (Phe-9). Residues 9–29 traverse the membrane as a helical segment; it reads FTLLEVMVVIVILGILASLVV. The interval 70–92 is disordered; the sequence is QGLDALVNKPTAAPEPRSYRDGG.

Belongs to the GSP G family. Type II secretion system is composed of four main components: the outer membrane complex, the inner membrane complex, the cytoplasmic secretion ATPase and the periplasm-spanning pseudopilus. Forms homomultimers. In terms of processing, cleaved by the prepilin peptidase. Post-translationally, methylated by prepilin peptidase at the amino group of the N-terminal phenylalanine once the leader sequence is cleaved.

It localises to the cell inner membrane. Functionally, core component of the type II secretion system required for the energy-dependent secretion of extracellular factors such as proteases and toxins from the periplasm. Pseudopilin (pilin-like) protein that polymerizes to form the pseudopilus. Further polymerization triggers pseudopilus growth. The protein is Type II secretion system core protein G (exeG) of Aeromonas hydrophila.